A 158-amino-acid polypeptide reads, in one-letter code: 2-C-methyl-D-erythritol 2,4-cyclodiphosphate synthase (158 aa).

Positions 9 and 11 each coordinate a divalent metal cation. 4-CDP-2-C-methyl-D-erythritol 2-phosphate-binding positions include 9–11 (DVH) and 35–36 (HS). Residue His43 coordinates a divalent metal cation. Residues 57-59 (DIG) and Arg143 each bind 4-CDP-2-C-methyl-D-erythritol 2-phosphate.

This sequence belongs to the IspF family. In terms of assembly, homotrimer. A divalent metal cation is required as a cofactor.

The enzyme catalyses 4-CDP-2-C-methyl-D-erythritol 2-phosphate = 2-C-methyl-D-erythritol 2,4-cyclic diphosphate + CMP. Its pathway is isoprenoid biosynthesis; isopentenyl diphosphate biosynthesis via DXP pathway; isopentenyl diphosphate from 1-deoxy-D-xylulose 5-phosphate: step 4/6. Its function is as follows. Involved in the biosynthesis of isopentenyl diphosphate (IPP) and dimethylallyl diphosphate (DMAPP), two major building blocks of isoprenoid compounds. Catalyzes the conversion of 4-diphosphocytidyl-2-C-methyl-D-erythritol 2-phosphate (CDP-ME2P) to 2-C-methyl-D-erythritol 2,4-cyclodiphosphate (ME-CPP) with a corresponding release of cytidine 5-monophosphate (CMP). The sequence is that of 2-C-methyl-D-erythritol 2,4-cyclodiphosphate synthase from Chromobacterium violaceum (strain ATCC 12472 / DSM 30191 / JCM 1249 / CCUG 213 / NBRC 12614 / NCIMB 9131 / NCTC 9757 / MK).